Consider the following 196-residue polypeptide: Probable malonic semialdehyde reductase RutE (196 aa).

The protein belongs to the nitroreductase family. HadB/RutE subfamily. The cofactor is FMN.

It carries out the reaction 3-hydroxypropanoate + NADP(+) = 3-oxopropanoate + NADPH + H(+). May reduce toxic product malonic semialdehyde to 3-hydroxypropionic acid, which is excreted. The sequence is that of Probable malonic semialdehyde reductase RutE from Shigella dysenteriae serotype 1 (strain Sd197).